Consider the following 946-residue polypeptide: DNA primase (946 aa).

The tract at residues 596–626 (RDTEEDEDGKEDKNNVPGNGVFQKTTSSVDT) is disordered. A compositionally biased stretch (polar residues) spans 617–626 (FQKTTSSVDT). A CHC2-type zinc finger spans residues 881–920 (CLNYTHRNPQETVQVFIDLRTEHSYALWASLWSRCFTKKC).

This sequence belongs to the herpesviridae DNA primase family. As to quaternary structure, associates with the helicase and the primase-associated factor to form the helicase-primase factor.

It localises to the host nucleus. Essential component of the helicase/primase complex. Unwinds the DNA at the replication forks and generates single-stranded DNA for both leading and lagging strand synthesis. The primase initiates primer synthesis and thereby produces large amount of short RNA primers on the lagging strand that the polymerase elongates using dNTPs. This Human cytomegalovirus (strain Merlin) (HHV-5) protein is DNA primase (UL70).